The chain runs to 145 residues: Large ribosomal subunit protein uL15 (145 aa).

The interval 23-51 (IGSGWGKTGGRGHKGQKSRSGGKIRKSFE) is disordered. The segment covering 32–47 (GRGHKGQKSRSGGKIR) has biased composition (basic residues).

It belongs to the universal ribosomal protein uL15 family. Part of the 50S ribosomal subunit.

In terms of biological role, binds to the 23S rRNA. The sequence is that of Large ribosomal subunit protein uL15 from Buchnera aphidicola subsp. Cinara cedri (strain Cc).